The sequence spans 138 residues: MLSPKRTKFRKAHKGRIKGVTKGGSALNFGAYGLKALEPERITARQIEAARRALTRHMKRQGRVWIRIFPDLPVSSKPAEVRMGSGKGAPEFWTARVAPGRILFEVDGVAEEIARHGFALAAAKLPIKTKFISRIGDI.

Belongs to the universal ribosomal protein uL16 family. Part of the 50S ribosomal subunit.

Functionally, binds 23S rRNA and is also seen to make contacts with the A and possibly P site tRNAs. The protein is Large ribosomal subunit protein uL16 of Paramagnetospirillum magneticum (strain ATCC 700264 / AMB-1) (Magnetospirillum magneticum).